Consider the following 729-residue polypeptide: Rho GTPase-activating protein 28 (729 aa).

Disordered regions lie at residues 20 to 42 (AQPP…LSRK) and 55 to 105 (SNES…AEVT). The span at 65–75 (SRSNSEASVDS) shows a compositional bias: polar residues. Position 72 is a phosphoserine (S72). Basic and acidic residues predominate over residues 80–89 (DFWREIESIK). T159 is subject to Phosphothreonine. The disordered stretch occupies residues 176-236 (GVSESPPRDT…SQDKEGSFAV (61 aa)). The span at 195–204 (GTKEERELPR) shows a compositional bias: basic and acidic residues. Positions 217-226 (SLNSTTLSDA) are enriched in polar residues. The 198-residue stretch at 380–577 (VPLTVLLDGD…LMLKYQKILW (198 aa)) folds into the Rho-GAP domain. A disordered region spans residues 612–631 (TLERETASPKTSKVLQKSPS). A compositionally biased stretch (polar residues) spans 619–630 (SPKTSKVLQKSP).

As to expression, expressed in testis. Expressed at moderate level in kidney and ovary, and weakly expressed in spleen and skeletal muscle.

Functionally, GTPase activator for the Rho-type GTPases by converting them to an inactive GDP-bound state. This is Rho GTPase-activating protein 28 (ARHGAP28) from Homo sapiens (Human).